A 111-amino-acid polypeptide reads, in one-letter code: WAP four-disulfide core domain protein 12 (111 aa).

A signal peptide spans 1–23 (MGSSSFLVLMVSLALVTLVVVEG). One can recognise a WAP domain in the interval 27 to 74 (GIEKAGVCPADNVRCFKSNPPQCHTDQDCLGERKCCYLHCGFKCVIPV). Disulfide bonds link cysteine 34–cysteine 62, cysteine 41–cysteine 66, cysteine 49–cysteine 61, and cysteine 55–cysteine 70. Residues 80 to 111 (GGNKDEDVSGPHPEPGWEAKSPGSSSTGCPQI) form a disordered region. Over residues 101–111 (PGSSSTGCPQI) the composition is skewed to polar residues.

It is found in the secreted. Its function is as follows. Antibacterial protein. Putative acid-stable proteinase inhibitor. The chain is WAP four-disulfide core domain protein 12 (WFDC12) from Colobus guereza (Mantled guereza).